The primary structure comprises 355 residues: Peptide chain release factor 1 (355 aa).

Gln-231 is subject to N5-methylglutamine.

The protein belongs to the prokaryotic/mitochondrial release factor family. Methylated by PrmC. Methylation increases the termination efficiency of RF1.

It localises to the cytoplasm. Peptide chain release factor 1 directs the termination of translation in response to the peptide chain termination codons UAG and UAA. This chain is Peptide chain release factor 1, found in Wolinella succinogenes (strain ATCC 29543 / DSM 1740 / CCUG 13145 / JCM 31913 / LMG 7466 / NCTC 11488 / FDC 602W) (Vibrio succinogenes).